Reading from the N-terminus, the 287-residue chain is Undecaprenyl-diphosphatase (287 aa).

8 helical membrane passes run 1–21 (MALW…FLPV), 49–69 (MILF…VVFA), 101–121 (LFLL…TLKA), 126–146 (VFAN…LLFW), 160–180 (TGVG…MPGL), 203–223 (YSFF…AIEV), 232–252 (VSVA…IVSL), and 267–287 (FSFY…DLPI).

It belongs to the UppP family.

The protein localises to the cell inner membrane. The enzyme catalyses di-trans,octa-cis-undecaprenyl diphosphate + H2O = di-trans,octa-cis-undecaprenyl phosphate + phosphate + H(+). In terms of biological role, catalyzes the dephosphorylation of undecaprenyl diphosphate (UPP). Confers resistance to bacitracin. The polypeptide is Undecaprenyl-diphosphatase (Halorhodospira halophila (strain DSM 244 / SL1) (Ectothiorhodospira halophila (strain DSM 244 / SL1))).